We begin with the raw amino-acid sequence, 834 residues long: Periplasmic nitrate reductase (834 aa).

Positions 1–29 (MSLTRRQFAKANAAAIAATVAGMPIASTA) form a signal peptide, tat-type signal. A 4Fe-4S Mo/W bis-MGD-type domain is found at 41–97 (LKWDKAPCRFCGTGCGVMVATRENRVVATHGDVKADVNRGINCVKGYFLSKIMYGTD). The [4Fe-4S] cluster site is built by C48, C51, C55, and C83. Residues K85, Q152, N177, C181, 214 to 221 (WGSNMAEM), 245 to 249 (STFEH), 264 to 266 (QTD), M375, Q379, N485, 511 to 512 (SD), K534, D561, and 721 to 730 (TGRVLEHWHT) each bind Mo-bis(molybdopterin guanine dinucleotide). F797 contributes to the substrate binding site. Mo-bis(molybdopterin guanine dinucleotide)-binding residues include N805 and K822.

It belongs to the prokaryotic molybdopterin-containing oxidoreductase family. NasA/NapA/NarB subfamily. As to quaternary structure, component of the periplasmic nitrate reductase NapAB complex composed of NapA and NapB. [4Fe-4S] cluster serves as cofactor. Mo-bis(molybdopterin guanine dinucleotide) is required as a cofactor. Predicted to be exported by the Tat system. The position of the signal peptide cleavage has not been experimentally proven.

It localises to the periplasm. The catalysed reaction is 2 Fe(II)-[cytochrome] + nitrate + 2 H(+) = 2 Fe(III)-[cytochrome] + nitrite + H2O. Catalytic subunit of the periplasmic nitrate reductase complex NapAB. Receives electrons from NapB and catalyzes the reduction of nitrate to nitrite. The polypeptide is Periplasmic nitrate reductase (Stutzerimonas stutzeri (Pseudomonas stutzeri)).